Here is a 63-residue protein sequence, read N- to C-terminus: Cytochrome c oxidase subunit 7C, mitochondrial (63 aa).

A mitochondrion-targeting transit peptide spans methionine 1 to arginine 16. Residues serine 17–lysine 34 are Mitochondrial matrix-facing. Lysine 25 bears the N6-acetyllysine; alternate mark. Lysine 25 bears the N6-succinyllysine; alternate mark. Residues tryptophan 35–arginine 57 form a helical membrane-spanning segment. Residues histidine 58–lysine 63 lie on the Mitochondrial intermembrane side of the membrane.

Belongs to the cytochrome c oxidase VIIc family. As to quaternary structure, component of the cytochrome c oxidase (complex IV, CIV), a multisubunit enzyme composed of 14 subunits. The complex is composed of a catalytic core of 3 subunits MT-CO1, MT-CO2 and MT-CO3, encoded in the mitochondrial DNA, and 11 supernumerary subunits COX4I, COX5A, COX5B, COX6A, COX6B, COX6C, COX7A, COX7B, COX7C, COX8 and NDUFA4, which are encoded in the nuclear genome. The complex exists as a monomer or a dimer and forms supercomplexes (SCs) in the inner mitochondrial membrane with NADH-ubiquinone oxidoreductase (complex I, CI) and ubiquinol-cytochrome c oxidoreductase (cytochrome b-c1 complex, complex III, CIII), resulting in different assemblies (supercomplex SCI(1)III(2)IV(1) and megacomplex MCI(2)III(2)IV(2)). Interacts with RAB5IF.

Its subcellular location is the mitochondrion inner membrane. It participates in energy metabolism; oxidative phosphorylation. Functionally, component of the cytochrome c oxidase, the last enzyme in the mitochondrial electron transport chain which drives oxidative phosphorylation. The respiratory chain contains 3 multisubunit complexes succinate dehydrogenase (complex II, CII), ubiquinol-cytochrome c oxidoreductase (cytochrome b-c1 complex, complex III, CIII) and cytochrome c oxidase (complex IV, CIV), that cooperate to transfer electrons derived from NADH and succinate to molecular oxygen, creating an electrochemical gradient over the inner membrane that drives transmembrane transport and the ATP synthase. Cytochrome c oxidase is the component of the respiratory chain that catalyzes the reduction of oxygen to water. Electrons originating from reduced cytochrome c in the intermembrane space (IMS) are transferred via the dinuclear copper A center (CU(A)) of subunit 2 and heme A of subunit 1 to the active site in subunit 1, a binuclear center (BNC) formed by heme A3 and copper B (CU(B)). The BNC reduces molecular oxygen to 2 water molecules using 4 electrons from cytochrome c in the IMS and 4 protons from the mitochondrial matrix. The polypeptide is Cytochrome c oxidase subunit 7C, mitochondrial (Cox7c) (Mus musculus (Mouse)).